Reading from the N-terminus, the 307-residue chain is Nitric oxide synthase-interacting protein homolog (307 aa).

Positions 120–159 (PAMTPAHSSAAASEKPSTSSAAAAASSESSSASSISNMTN) are disordered. Residues 127 to 155 (SSAAASEKPSTSSAAAAASSESSSASSIS) are compositionally biased toward low complexity.

This sequence belongs to the NOSIP family.

The protein localises to the cytoplasm. It is found in the nucleus. In terms of biological role, negatively regulates nitric oxide production by inducing nitric oxide synthase translocation to actin cytoskeleton and inhibiting its enzymatic activity. In Drosophila melanogaster (Fruit fly), this protein is Nitric oxide synthase-interacting protein homolog.